A 482-amino-acid chain; its full sequence is MGQFISFMQEIPIFLQEALNIALVAVSLICIVKGLVNLYRCGLFQLMVFLVLAGRSCSEETFKIGMHTQFQEVSLSLSALLTNQSHELPMLCLANKTHLYLKSGRSSFKINIDSVTVLTRSADVFVHSPKLGSCFESDEEWVVAWWIEAIGHRWDQDPGLLCRNKTKTEGKLIQINISRADGNVHYGWRLKNGLDHIYRGREEPCFEGKQCLIKIQPEDWPTDCKADHTNTFRFLSRSQKSIAVGRTLKAFFSWSLTDPLGNEAPGGYCLEKWMLVASELKCFGTLQCQVQPKSRLRVCDMLRLFDYNKNAIKTLNEETKTRVNVLSHTINALISDNLLMKNKIRELMSVPYCNYTRFWYVNHTLSGQHSLPRCWMIRNNSYLNSSEFRNEWILESDFLISEMLSKEYSERQGRTPITLVDICFWSTEFFISTLFLHLIGFPTHEHIRGEGCPLPHRLNSMGGCRCGKYLPLKKPTIWHRRH.

G2 carries the N-myristoyl glycine; by host lipid modification. Over 2 to 17 (GQFISFMQEIPIFLQE) the chain is Extracellular. Residues 18–32 (ALNIALVAVSLICIV) form a helical membrane-spanning segment. K33 is a topological domain (cytoplasmic). Residues 34 to 53 (GLVNLYRCGLFQLMVFLVLA) form a helical membrane-spanning segment. Extracellular loops occupy residues 54-58 (GRSCS) and 59-421 (EETF…TLVD). C57 is a binding site for Zn(2+). Residues N83 and N95 are each glycosylated (N-linked (GlcNAc...) asparagine; by host). 5 disulfide bridges follow: C92/C224, C134/C162, C205/C211, C269/C282, and C353/C374. Residues N164 and N176 are each glycosylated (N-linked (GlcNAc...) asparagine; by host). Residues N354, N362, N379, and N384 are each glycosylated (N-linked (GlcNAc...) asparagine; by host). Residues 422–442 (ICFWSTEFFISTLFLHLIGFP) form a helical membrane-spanning segment. Residues 443–482 (THEHIRGEGCPLPHRLNSMGGCRCGKYLPLKKPTIWHRRH) are Cytoplasmic-facing. Residues H444, H446, C452, H456, C464, C466, and H482 each coordinate Zn(2+).

Belongs to the arenaviridae GPC protein family. As to quaternary structure, homotetramer; disulfide-linked. In terms of assembly, homotetramer. GP2 homotetramers bind through ionic interactions with GP1 homotetramers to form the GP complex together with the stable signal peptide. The GP-C polyprotein interacts with the host protease MBTPS1/SKI-1 resulting in the polyprotein processing. Specific enzymatic cleavages in vivo yield mature proteins. GP-C polyprotein is cleaved in the endoplasmic reticulum by the host protease MBTPS1. Only cleaved glycoprotein is incorporated into virions. Post-translationally, the SSP remains stably associated with the GP complex following cleavage by signal peptidase and plays crucial roles in the trafficking of GP through the secretory pathway. In terms of processing, myristoylation is necessary for GP2-mediated fusion activity.

The protein resides in the virion membrane. Its subcellular location is the host endoplasmic reticulum membrane. It is found in the host Golgi apparatus membrane. The protein localises to the host cell membrane. In terms of biological role, class I viral fusion protein that directs fusion of viral and host endosomal membranes, leading to delivery of the nucleocapsid into the cytoplasm. Membrane fusion is mediated by irreversible conformational changes induced upon acidification in the endosome. Functionally, stable signal peptide (SSP): cleaved and functions as a signal peptide. In addition, it is also retained as the third component of the GP complex. The SSP is required for efficient glycoprotein expression, post-translational maturation cleavage of GP1 and GP2, glycoprotein transport to the cell surface plasma membrane, formation of infectious virus particles, and acid pH-dependent glycoprotein-mediated cell fusion. Its function is as follows. Interacts with the host receptor. This Artibeus (neotropical fruit bats) protein is Pre-glycoprotein polyprotein GP complex.